We begin with the raw amino-acid sequence, 495 residues long: NAD(+)--protein-arginine ADP-ribosyltransferase Tre1 (495 aa).

Residues 278–309 form a disordered region; that stretch reads PDLQIKGPTPVKKPEPLQPARQPEKASAPKPV. One can recognise a TR mART core domain in the interval 315 to 495; it reads MSLREAVGNQ…VTQFILKEIP (181 aa). Residues 344-495 form an ART domain region; the sequence is RSALLTDDQI…VTQFILKEIP (152 aa). Residues R406, S431, and E466 contribute to the active site.

This sequence belongs to the Arg-specific ADP-ribosyltransferase family.

Its subcellular location is the secreted. It localises to the host cytoplasm. The catalysed reaction is L-arginyl-[protein] + NAD(+) = N(omega)-(ADP-D-ribosyl)-L-arginyl-[protein] + nicotinamide + H(+). Its function is as follows. Toxic component of a contact-dependent interbacterial competition system (also called effector-immunity systems). Acts by ADP-ribosylating a number of target proteins in target cells; E.coli target proteins include FtsZ, EFTu, RNase E, Fis, YegQ, GuaB and IF2. This chain is NAD(+)--protein-arginine ADP-ribosyltransferase Tre1, found in Pseudomonas putida (strain GB-1).